Reading from the N-terminus, the 434-residue chain is Ataxin-10 homolog (434 aa).

Belongs to the ataxin-10 family.

The protein resides in the cytoplasm. Its subcellular location is the nucleus. Functionally, may play a role in the regulation of cytokinesis. The sequence is that of Ataxin-10 homolog (mug160) from Schizosaccharomyces pombe (strain 972 / ATCC 24843) (Fission yeast).